The primary structure comprises 384 residues: Mannitol-1-phosphate 5-dehydrogenase (384 aa).

3 to 14 (AVHFGAGNIGRG) serves as a coordination point for NAD(+).

The protein belongs to the mannitol dehydrogenase family.

It carries out the reaction D-mannitol 1-phosphate + NAD(+) = beta-D-fructose 6-phosphate + NADH + H(+). The polypeptide is Mannitol-1-phosphate 5-dehydrogenase (Arthrobacter sp. (strain FB24)).